A 217-amino-acid chain; its full sequence is Redox-sensing transcriptional repressor Rex (217 aa).

A DNA-binding region (H-T-H motif) is located at residues 18 to 57; it reads LYYRFLKNLHASGKQRVSSAELSDAVKVDSATIRRDFSYF. Residue 92 to 97 participates in NAD(+) binding; the sequence is GVGNLG.

The protein belongs to the transcriptional regulatory Rex family. Homodimer.

It localises to the cytoplasm. In terms of biological role, modulates transcription in response to changes in cellular NADH/NAD(+) redox state. This Bacillus pumilus (strain SAFR-032) protein is Redox-sensing transcriptional repressor Rex.